Here is a 321-residue protein sequence, read N- to C-terminus: MGEPQGSMRILVTGGSGLVGKAIQKVVADGAGLPGEDWVFVSSKDADLTDAAQTRALLEKVRPTHVIHLAAMVGGLFRNIKYNLDFWRKNVHINDNVLHSAFEVGARKVVSCLSTCIFPDKTTYPIDETMIHNGPPHSSNFGYSYVKRMIDVQNRAYFQQYGCTFTAVIPTNVFGPHDNFNIEDGHVLPGLIHKVHLAKSSGSALTVWGTGKPRRQFIYSLDLAQLFIWVLREYNEVEPIILSVGEDDEVSIKEAAEAVVEAMDFHGEVTFDTTKSDGQFKKTASNSKLRTYLPDFRFTPFKQAVKETCAWFTDNYEQARK.

14 to 20 serves as a coordination point for NADP(+); the sequence is GGSGLVG. Catalysis depends on Y143, which acts as the Proton donor/acceptor. Residues K147, 170-173, and H186 each bind NADP(+); that span reads PTNV. Substrate contacts are provided by K194, W208, R215, and D277.

It belongs to the NAD(P)-dependent epimerase/dehydratase family. Fucose synthase subfamily. Homodimer.

The enzyme catalyses GDP-beta-L-fucose + NADP(+) = GDP-4-dehydro-alpha-D-rhamnose + NADPH + H(+). It participates in nucleotide-sugar biosynthesis; GDP-L-fucose biosynthesis via de novo pathway; GDP-L-fucose from GDP-alpha-D-mannose: step 2/2. Its function is as follows. Catalyzes the two-step NADP-dependent conversion of GDP-4-dehydro-6-deoxy-D-mannose to GDP-fucose, involving an epimerase and a reductase reaction. This is GDP-L-fucose synthase (GFUS) from Pongo abelii (Sumatran orangutan).